A 413-amino-acid polypeptide reads, in one-letter code: Serine hydroxymethyltransferase (413 aa).

(6S)-5,6,7,8-tetrahydrofolate is bound by residues Leu-120 and 124–126; that span reads GHL. Lys-229 carries the N6-(pyridoxal phosphate)lysine modification. Residue 352-354 coordinates (6S)-5,6,7,8-tetrahydrofolate; sequence SPF.

Belongs to the SHMT family. Homodimer. Pyridoxal 5'-phosphate serves as cofactor.

Its subcellular location is the cytoplasm. The enzyme catalyses (6R)-5,10-methylene-5,6,7,8-tetrahydrofolate + glycine + H2O = (6S)-5,6,7,8-tetrahydrofolate + L-serine. It participates in one-carbon metabolism; tetrahydrofolate interconversion. It functions in the pathway amino-acid biosynthesis; glycine biosynthesis; glycine from L-serine: step 1/1. Catalyzes the reversible interconversion of serine and glycine with tetrahydrofolate (THF) serving as the one-carbon carrier. This reaction serves as the major source of one-carbon groups required for the biosynthesis of purines, thymidylate, methionine, and other important biomolecules. Also exhibits THF-independent aldolase activity toward beta-hydroxyamino acids, producing glycine and aldehydes, via a retro-aldol mechanism. This is Serine hydroxymethyltransferase from Heliobacterium modesticaldum (strain ATCC 51547 / Ice1).